Here is a 162-residue protein sequence, read N- to C-terminus: Interleukin-15 (162 aa).

The signal sequence occupies residues 1 to 29 (MRISKPYLRSTSIQCYLCLLLNSHFLAEA). A propeptide spanning residues 30 to 48 (GIHVFIFGCISAGLPKTEA) is cleaved from the precursor. Disulfide bonds link cysteine 83/cysteine 133 and cysteine 90/cysteine 136. N-linked (GlcNAc...) asparagine glycosylation is found at asparagine 108, asparagine 119, asparagine 127, and asparagine 143.

Belongs to the IL-15/IL-21 family. Expressed in many tissues including heart, spleen, lung, liver, muscle and kidney (at mRNA level). Expressed in many tissues including heart, spleen, lung, liver, muscle and kidney (at protein level).

It localises to the secreted. Its function is as follows. Cytokine that plays a major role in the development of inflammatory and protective immune responses to microbial invaders and parasites by modulating immune cells of both the innate and adaptive immune systems. Stimulates the proliferation of natural killer cells, T-cells and B-cells and promotes the secretion of several cytokines. In monocytes, induces the production of IL8 and monocyte chemotactic protein 1/CCL2, two chemokines that attract neutrophils and monocytes respectively to sites of infection. Unlike most cytokines, which are secreted in soluble form, IL15 is expressed in association with its high affinity IL15RA on the surface of IL15-producing cells and delivers signals to target cells that express IL2RB and IL2RG receptor subunits. Binding to its receptor triggers the phosphorylation of JAK1 and JAK3 and the recruitment and subsequent phosphorylation of signal transducer and activator of transcription-3/STAT3 and STAT5. In mast cells, induces the rapid tyrosine phosphorylation of STAT6 and thereby controls mast cell survival and release of cytokines such as IL4. The chain is Interleukin-15 (IL15) from Oryctolagus cuniculus (Rabbit).